The chain runs to 276 residues: UPF0276 protein Caul_0757 (276 aa).

It belongs to the UPF0276 family.

The sequence is that of UPF0276 protein Caul_0757 from Caulobacter sp. (strain K31).